The sequence spans 289 residues: Probable endonuclease 4 (289 aa).

9 residues coordinate Zn(2+): histidine 75, histidine 115, glutamate 153, aspartate 187, histidine 190, histidine 224, aspartate 237, histidine 239, and glutamate 269.

This sequence belongs to the AP endonuclease 2 family. The cofactor is Zn(2+).

The catalysed reaction is Endonucleolytic cleavage to 5'-phosphooligonucleotide end-products.. Functionally, endonuclease IV plays a role in DNA repair. It cleaves phosphodiester bonds at apurinic or apyrimidinic (AP) sites, generating a 3'-hydroxyl group and a 5'-terminal sugar phosphate. This chain is Probable endonuclease 4, found in Chlamydia abortus (strain DSM 27085 / S26/3) (Chlamydophila abortus).